The sequence spans 316 residues: Ornithine carbamoyltransferase (316 aa).

Residues 57 to 60 (STRT), Gln84, Arg108, and 135 to 138 (HPCQ) contribute to the carbamoyl phosphate site. Residues Asn166, Asp230, and 234–235 (SM) each bind L-ornithine. Residues 269–270 (CL) and Arg297 contribute to the carbamoyl phosphate site.

The protein belongs to the aspartate/ornithine carbamoyltransferase superfamily. OTCase family.

The protein resides in the cytoplasm. The enzyme catalyses carbamoyl phosphate + L-ornithine = L-citrulline + phosphate + H(+). The protein operates within amino-acid degradation; L-arginine degradation via ADI pathway; carbamoyl phosphate from L-arginine: step 2/2. Its function is as follows. Reversibly catalyzes the transfer of the carbamoyl group from carbamoyl phosphate (CP) to the N(epsilon) atom of ornithine (ORN) to produce L-citrulline. This is Ornithine carbamoyltransferase from Bacillus cereus (strain AH187).